The chain runs to 266 residues: Probable sporulation sigma-E factor-processing peptidase (266 aa).

4 consecutive transmembrane segments (helical) span residues 36 to 52 (LILAGIFGGLYVIVLVI), 60 to 76 (SLIFKIIAAFLMIIICF), 89 to 105 (AVLIMYSMVTAGLCFFI), and 126 to 142 (WILIAIMIIYMFVNRII). The active site involves Asp-174.

This sequence belongs to the peptidase U4 family.

It is found in the cell membrane. Probable aspartic protease that is responsible for the proteolytic cleavage of the RNA polymerase sigma E factor (SigE/spoIIGB) to yield the active peptide in the mother cell during sporulation. Responds to a signal from the forespore that is triggered by the extracellular signal protein SpoIIR. The sequence is that of Probable sporulation sigma-E factor-processing peptidase (spoIIGA) from Clostridium acetobutylicum (strain ATCC 824 / DSM 792 / JCM 1419 / IAM 19013 / LMG 5710 / NBRC 13948 / NRRL B-527 / VKM B-1787 / 2291 / W).